Here is a 432-residue protein sequence, read N- to C-terminus: Glucose-6-phosphate isomerase (432 aa).

Glutamate 283 acts as the Proton donor in catalysis. Active-site residues include histidine 304 and lysine 418.

This sequence belongs to the GPI family.

It localises to the cytoplasm. It carries out the reaction alpha-D-glucose 6-phosphate = beta-D-fructose 6-phosphate. The protein operates within carbohydrate biosynthesis; gluconeogenesis. Its pathway is carbohydrate degradation; glycolysis; D-glyceraldehyde 3-phosphate and glycerone phosphate from D-glucose: step 2/4. In terms of biological role, catalyzes the reversible isomerization of glucose-6-phosphate to fructose-6-phosphate. This Rubrobacter xylanophilus (strain DSM 9941 / JCM 11954 / NBRC 16129 / PRD-1) protein is Glucose-6-phosphate isomerase.